Here is a 163-residue protein sequence, read N- to C-terminus: Transcription elongation factor GreB (163 aa).

Belongs to the GreA/GreB family. GreB subfamily.

Its function is as follows. Necessary for efficient RNA polymerase transcription elongation past template-encoded arresting sites. The arresting sites in DNA have the property of trapping a certain fraction of elongating RNA polymerases that pass through, resulting in locked ternary complexes. Cleavage of the nascent transcript by cleavage factors such as GreA or GreB allows the resumption of elongation from the new 3'terminus. GreB releases sequences of up to 9 nucleotides in length. The protein is Transcription elongation factor GreB of Vibrio parahaemolyticus serotype O3:K6 (strain RIMD 2210633).